Here is a 127-residue protein sequence, read N- to C-terminus: Protein KRTCAP2 homolog (127 aa).

Transmembrane regions (helical) follow at residues Leu-13–Phe-33, Ile-41–Ile-61, Val-65–His-85, and Val-87–Ser-107.

Belongs to the KRTCAP2 family. In terms of assembly, component of the oligosaccharyltransferase (OST) complex.

The protein localises to the membrane. Its function is as follows. Subunit of the oligosaccharyl transferase (OST) complex that catalyzes the initial transfer of a defined glycan (Glc(3)Man(9)GlcNAc(2) in eukaryotes) from the lipid carrier dolichol-pyrophosphate to an asparagine residue within an Asn-X-Ser/Thr consensus motif in nascent polypeptide chains, the first step in protein N-glycosylation. N-glycosylation occurs cotranslationally and the complex associates with the Sec61 complex at the channel-forming translocon complex that mediates protein translocation across the endoplasmic reticulum (ER). All subunits are required for a maximal enzyme activity. In Dictyostelium discoideum (Social amoeba), this protein is Protein KRTCAP2 homolog.